Reading from the N-terminus, the 258-residue chain is Thiazole synthase (258 aa).

K98 acts as the Schiff-base intermediate with DXP in catalysis. 1-deoxy-D-xylulose 5-phosphate is bound by residues G159, 185–186, and 207–208; these read AG and NT.

It belongs to the ThiG family. Homotetramer. Forms heterodimers with either ThiH or ThiS.

The protein localises to the cytoplasm. It catalyses the reaction [ThiS sulfur-carrier protein]-C-terminal-Gly-aminoethanethioate + 2-iminoacetate + 1-deoxy-D-xylulose 5-phosphate = [ThiS sulfur-carrier protein]-C-terminal Gly-Gly + 2-[(2R,5Z)-2-carboxy-4-methylthiazol-5(2H)-ylidene]ethyl phosphate + 2 H2O + H(+). The protein operates within cofactor biosynthesis; thiamine diphosphate biosynthesis. Its function is as follows. Catalyzes the rearrangement of 1-deoxy-D-xylulose 5-phosphate (DXP) to produce the thiazole phosphate moiety of thiamine. Sulfur is provided by the thiocarboxylate moiety of the carrier protein ThiS. In vitro, sulfur can be provided by H(2)S. This chain is Thiazole synthase, found in Bacillus cereus (strain ATCC 14579 / DSM 31 / CCUG 7414 / JCM 2152 / NBRC 15305 / NCIMB 9373 / NCTC 2599 / NRRL B-3711).